Reading from the N-terminus, the 24-residue chain is Xenoposin-precursor fragment B1 (24 aa).

Expressed by the skin glands.

Its subcellular location is the secreted. In terms of biological role, has antibacterial activity. This Xenopus borealis (Kenyan clawed frog) protein is Xenoposin-precursor fragment B1.